The chain runs to 97 residues: uncharacterized protein (97 aa).

This is an uncharacterized protein from Alcelaphine herpesvirus 1 (strain C500) (AlHV-1).